The sequence spans 161 residues: ATP synthase subunit b 1 (161 aa).

A helical transmembrane segment spans residues 1 to 21 (MFATAEFWILACLVAFFAILG).

It belongs to the ATPase B chain family. As to quaternary structure, F-type ATPases have 2 components, F(1) - the catalytic core - and F(0) - the membrane proton channel. F(1) has five subunits: alpha(3), beta(3), gamma(1), delta(1), epsilon(1). F(0) has three main subunits: a(1), b(2) and c(10-14). The alpha and beta chains form an alternating ring which encloses part of the gamma chain. F(1) is attached to F(0) by a central stalk formed by the gamma and epsilon chains, while a peripheral stalk is formed by the delta and b chains.

Its subcellular location is the cell inner membrane. In terms of biological role, f(1)F(0) ATP synthase produces ATP from ADP in the presence of a proton or sodium gradient. F-type ATPases consist of two structural domains, F(1) containing the extramembraneous catalytic core and F(0) containing the membrane proton channel, linked together by a central stalk and a peripheral stalk. During catalysis, ATP synthesis in the catalytic domain of F(1) is coupled via a rotary mechanism of the central stalk subunits to proton translocation. Component of the F(0) channel, it forms part of the peripheral stalk, linking F(1) to F(0). The chain is ATP synthase subunit b 1 from Parvibaculum lavamentivorans (strain DS-1 / DSM 13023 / NCIMB 13966).